Here is a 67-residue protein sequence, read N- to C-terminus: Conotoxin TxMMSK-01 (67 aa).

Positions Met1–Ala20 are cleaved as a signal peptide. Residues Val21–Arg53 constitute a propeptide that is removed on maturation. Intrachain disulfides connect Cys54-Cys66, Cys55-Cys62, and Cys59-Cys65. Residue Pro64 is modified to 4-hydroxyproline. The residue at position 66 (Cys66) is a Cysteine amide.

The protein belongs to the conotoxin M superfamily. In terms of tissue distribution, expressed by the venom duct.

It is found in the secreted. This chain is Conotoxin TxMMSK-01, found in Conus textile (Cloth-of-gold cone).